The primary structure comprises 143 residues: Transcriptional regulator MraZ (143 aa).

2 SpoVT-AbrB domains span residues 5-47 and 76-119; these read EYRH…PQVE and ATEC…SKEL.

The protein belongs to the MraZ family. As to quaternary structure, forms oligomers.

Its subcellular location is the cytoplasm. The protein resides in the nucleoid. The sequence is that of Transcriptional regulator MraZ from Halalkalibacterium halodurans (strain ATCC BAA-125 / DSM 18197 / FERM 7344 / JCM 9153 / C-125) (Bacillus halodurans).